The chain runs to 512 residues: MRLVLLFSCVLAVSSYAEIILAHSDENLLSRTKNNLSKWNENRLYDYGSKSTMSLPVSSLFPALQTLWIGVVADCSYVTHFTSRMEAKKHIFQEFEGVSTLYEDSFNINVQIHSLILPSAHDCSANVVDRPEISMSPRISIEEKLEIFSKWKYESPGNNVFEAISPHERESFPSEPQVSVLFTSSVKRSPHGVSWFATICSETHIENEWHVGPLSVVSAYPNDRLVVAHEIGHILGLIHDCNKKSCGDHSEACCPLSSSLCDAQELYIMNPSNSYTYANLRFSDCSILQLHSLVEKKYVSLSCLSKPSEKSVLRLGTCGNGIVEDGEECDCGEDCENNPCCDGKTCKLTKGSLCDDQQDACCYQCHFKNAGTLCRQSTNPCDKPEFCTGISSKCPVDENWDDGRICQDSLGMGSCASGVCTSASRQCKKLTNFSSLSCHSDSCKVSCQNEDGTCFISAKDYIDGTRCRGGLCYNGVCVPIEGSSASWSKQPSLFCASGTMLISLAVIAWFFW.

The signal sequence occupies residues 1–15; sequence MRLVLLFSCVLAVSS. Asn35 is a glycosylation site (N-linked (GlcNAc...) asparagine). Residues 65 to 306 form the Peptidase M12B domain; that stretch reads QTLWIGVVAD…KYVSLSCLSK (242 aa). Residue His229 participates in Zn(2+) binding. Glu230 is an active-site residue. Positions 233 and 239 each coordinate Zn(2+). Disulfide bonds link Cys246-Cys254 and Cys374-Cys394. Residues 315–402 form the Disintegrin domain; that stretch reads LGTCGNGIVE…KCPVDENWDD (88 aa). Asn432 carries N-linked (GlcNAc...) asparagine glycosylation.

It depends on Zn(2+) as a cofactor. Glycosylated.

It localises to the endoplasmic reticulum. The protein localises to the spore wall. Has a role in the development of the spore envelope. The polypeptide is Zinc metalloprotease mde10 (mde10) (Schizosaccharomyces pombe (strain 972 / ATCC 24843) (Fission yeast)).